Here is a 667-residue protein sequence, read N- to C-terminus: Gamma-tubulin complex component 4 (667 aa).

The disordered stretch occupies residues 424 to 446 (DHKADATQPREVPSRETSPREAP).

It belongs to the TUBGCP family. As to quaternary structure, component of the gamma-tubulin ring complex (gTuRC) consisting of TUBGCP2, TUBGCP3, TUBGCP4, TUBGCP5 and TUBGCP6 and gamma-tubulin TUBG1 or TUBG2. TUBGCP2, TUBGCP3, TUBGCP4, TUBGCP5 and TUBGCP6 assemble in a 5:5:2:1:1 stoichiometry; each is associated with a gamma-tubulin, thereby arranging 14 gamma-tubulins in a helical manner. Gamma-tubulin at the first position is blocked by TUBGCP3 at the last position, allowing 13 protafilaments to grow into a microtubule. The gTuRC (via TUBGCP3 and TUBGCP6) interacts with ACTB and MZT1; the interactions form a luminal bridge that stabilizes the initial structure during complex assembly. The gTuRC (via TUBGCP2) interacts with MZT2A/MZT2B and CDK5RAP2 (via CM1 motif); the interactions play a role in gTuRC activation. Interacts with NINL. Interacts with ATF5; the ATF5:PCNT:polyglutamylated tubulin (PGT) tripartite unites the mother centriole and the pericentriolar material (PCM) in the centrosome.

The protein localises to the cytoplasm. The protein resides in the cytoskeleton. Its subcellular location is the microtubule organizing center. It is found in the centrosome. Its function is as follows. Component of the gamma-tubulin ring complex (gTuRC) which mediates microtubule nucleation. The gTuRC regulates the minus-end nucleation of alpha-beta tubulin heterodimers that grow into microtubule protafilaments, a critical step in centrosome duplication and spindle formation. The polypeptide is Gamma-tubulin complex component 4 (Tubgcp4) (Mus musculus (Mouse)).